A 310-amino-acid polypeptide reads, in one-letter code: NADH-cytochrome b5 reductase 1 (310 aa).

A helical membrane pass occupies residues Glu32–Asn52. Residues Thr61–Thr166 form the FAD-binding FR-type domain. FAD is bound by residues Ala146 to Gly161 and Lys172 to Leu209.

This sequence belongs to the flavoprotein pyridine nucleotide cytochrome reductase family. Monomer. Component of the 2-(3-amino-3-carboxypropyl)histidine synthase complex composed of DPH1, DPH2, DPH3 and a NADH-dependent reductase, predominantly CBR1. Requires FAD as cofactor.

Its subcellular location is the mitochondrion outer membrane. It catalyses the reaction 2 Fe(III)-[cytochrome b5] + NADH = 2 Fe(II)-[cytochrome b5] + NAD(+) + H(+). The enzyme catalyses 2 Fe(3+)-[Dph3] + NADH = 2 Fe(2+)-[Dph3] + NAD(+) + H(+). It functions in the pathway protein modification; peptidyl-diphthamide biosynthesis. NADH-dependent reductase for DPH3 and cytochrome b5. Required for the first step of diphthamide biosynthesis, a post-translational modification of histidine which occurs in elongation factor 2. DPH1 and DPH2 transfer a 3-amino-3-carboxypropyl (ACP) group from S-adenosyl-L-methionine (SAM) to a histidine residue, the reaction is assisted by a reduction system comprising DPH3 and a NADH-dependent reductase, predominantly CBR1. By reducing DPH3, also involved in the formation of the tRNA wobble base modification mcm5s 2U (5-methoxycarbonylmethyl-2-thiouridine), mediated by the elongator complex. The cytochrome b5/NADH cytochrome b5 reductase electron transfer system supports the catalytic activity of several sterol biosynthetic enzymes. The chain is NADH-cytochrome b5 reductase 1 (CBR1) from Ajellomyces capsulatus (strain NAm1 / WU24) (Darling's disease fungus).